An 87-amino-acid polypeptide reads, in one-letter code: MKTFDELWAELSEKARSRPEGSGTVRALDAGVHGIGKKLVEEAAESWMAAEHEGPERAAEEISQLLYHAQVLMLATGIDLDDVYAHL.

It belongs to the PRA-PH family.

It is found in the cytoplasm. It catalyses the reaction 1-(5-phospho-beta-D-ribosyl)-ATP + H2O = 1-(5-phospho-beta-D-ribosyl)-5'-AMP + diphosphate + H(+). The protein operates within amino-acid biosynthesis; L-histidine biosynthesis; L-histidine from 5-phospho-alpha-D-ribose 1-diphosphate: step 2/9. The polypeptide is Phosphoribosyl-ATP pyrophosphatase (Nocardioides sp. (strain ATCC BAA-499 / JS614)).